Consider the following 117-residue polypeptide: Ig heavy chain V region UPC10 (117 aa).

The Ig-like domain maps to 1-116 (EVKLLESGGG…WGQVTTLTVS (116 aa)).

The sequence is that of Ig heavy chain V region UPC10 from Mus musculus (Mouse).